Consider the following 157-residue polypeptide: Endoribonuclease YbeY (157 aa).

Residues His-114, His-118, and His-124 each coordinate Zn(2+).

Belongs to the endoribonuclease YbeY family. The cofactor is Zn(2+).

The protein localises to the cytoplasm. Single strand-specific metallo-endoribonuclease involved in late-stage 70S ribosome quality control and in maturation of the 3' terminus of the 16S rRNA. In Caulobacter vibrioides (strain ATCC 19089 / CIP 103742 / CB 15) (Caulobacter crescentus), this protein is Endoribonuclease YbeY.